The chain runs to 76 residues: CLAVATA3/ESR (CLE)-related protein 46 (76 aa).

The N-terminal stretch at 1 to 26 (MRRHDIIIKLLLLMCLLLSRFVTREC) is a signal peptide. The tract at residues 53–76 (EEKKWHKHPSGPNPTGNRHPPVKH) is disordered. P61 and P64 each carry hydroxyproline. An O-linked (Ara...) hydroxyproline glycan is attached at P64.

The protein belongs to the CLV3/ESR signal peptide family. In terms of processing, the O-glycosylation (arabinosylation) of the hydroxyproline Pro-64 enhances binding affinity of the CLE46p peptide for its receptor.

The protein resides in the secreted. Its subcellular location is the extracellular space. In terms of biological role, extracellular signal peptide that regulates cell fate. This is CLAVATA3/ESR (CLE)-related protein 46 from Arabidopsis thaliana (Mouse-ear cress).